Consider the following 459-residue polypeptide: Argininosuccinate lyase (459 aa).

The tract at residues 440-459 (DEKKLEELRQNENRDNVYNP) is disordered.

The protein belongs to the lyase 1 family. Argininosuccinate lyase subfamily.

The protein localises to the cytoplasm. The catalysed reaction is 2-(N(omega)-L-arginino)succinate = fumarate + L-arginine. It participates in amino-acid biosynthesis; L-arginine biosynthesis; L-arginine from L-ornithine and carbamoyl phosphate: step 3/3. This Pyrococcus furiosus (strain ATCC 43587 / DSM 3638 / JCM 8422 / Vc1) protein is Argininosuccinate lyase.